Here is an 83-residue protein sequence, read N- to C-terminus: MREVTVRKGEPIDRALKRLKTKLDVEGILDEMRRRRAFETPMDERRRKARSASKRNKVKWRYSNKSEETASETAETPASAPEA.

The disordered stretch occupies residues 40-83; sequence TPMDERRRKARSASKRNKVKWRYSNKSEETASETAETPASAPEA. The span at 47 to 62 shows a compositional bias: basic residues; it reads RKARSASKRNKVKWRY. Low complexity predominate over residues 71–83; that stretch reads SETAETPASAPEA.

Belongs to the bacterial ribosomal protein bS21 family.

This chain is Small ribosomal subunit protein bS21, found in Akkermansia muciniphila (strain ATCC BAA-835 / DSM 22959 / JCM 33894 / BCRC 81048 / CCUG 64013 / CIP 107961 / Muc).